We begin with the raw amino-acid sequence, 557 residues long: Ras-specific guanine nucleotide-releasing factor RalGPS2 (557 aa).

Residues 49–287 (TPEEYAGQIT…YKLSLKIEPG (239 aa)) enclose the Ras-GEF domain. The interval 283–314 (KIEPGTSTPRSAASREDLVGPEVGASPQSGRK) is disordered. Phosphoserine occurs at positions 293, 296, 308, and 311. Thr326 bears the Phosphothreonine mark. A PXXP motif is present at residues 327-330 (PPSP). A phosphoserine mark is found at Ser329 and Ser343. Thr361 carries the post-translational modification Phosphothreonine. A disordered region spans residues 368–409 (RHLLDDSVMEPHAPSRGQAESSTLSSGISIGSSDGSELSEET). Ser374 bears the Phosphoserine mark. Residues 387 to 403 (ESSTLSSGISIGSSDGS) are compositionally biased toward low complexity. The PH domain maps to 431–543 (AVTIQGVLRR…WFKHLSAACQ (113 aa)). Residues 433–557 (TIQGVLRRKT…QVPTNLMTFE (125 aa)) are required for stimulation of nucleotide exchange by RALA.

In terms of assembly, interacts with the SH3 domains of GRB2 and PLCG1. Interacts with RALA.

The protein resides in the cytoplasm. It is found in the cell membrane. Guanine nucleotide exchange factor for the small GTPase RALA. May be involved in cytoskeletal organization. May also be involved in the stimulation of transcription in a Ras-independent fashion. In Macaca fascicularis (Crab-eating macaque), this protein is Ras-specific guanine nucleotide-releasing factor RalGPS2 (RALGPS2).